Here is a 311-residue protein sequence, read N- to C-terminus: Probable manganese-dependent inorganic pyrophosphatase (311 aa).

Mn(2+)-binding residues include histidine 9, aspartate 13, aspartate 15, aspartate 77, histidine 99, and aspartate 151.

The protein belongs to the PPase class C family. Requires Mn(2+) as cofactor.

Its subcellular location is the cytoplasm. The enzyme catalyses diphosphate + H2O = 2 phosphate + H(+). This Streptococcus pyogenes serotype M1 protein is Probable manganese-dependent inorganic pyrophosphatase.